The following is a 314-amino-acid chain: Annexin-like protein RJ4 (314 aa).

Annexin repeat units follow at residues phenylalanine 10–leucine 81, aspartate 82–threonine 153, lysine 165–arginine 236, and aspartate 240–glycine 311. Glycine 25, glycine 27, and glutamate 67 together coordinate Ca(2+). Residues isoleucine 253, arginine 255, glycine 257, aspartate 297, and threonine 298 each contribute to the Ca(2+) site.

The protein belongs to the annexin (TC 1.A.31.1) family. In terms of tissue distribution, predominantly in developing fruit.

The protein is Annexin-like protein RJ4 of Fragaria ananassa (Strawberry).